We begin with the raw amino-acid sequence, 391 residues long: Casein kinase II subunit alpha (391 aa).

The tract at residues 36-41 (QDDYQL) is interaction with beta subunit. In terms of domain architecture, Protein kinase spans 39 to 324 (YQLVRKLGRG…AREAMEHPYF (286 aa)). ATP contacts are provided by residues 45–53 (LGRGKYSEV) and K68. D156 serves as the catalytic Proton acceptor. Residues 335 to 346 (GSSNMPGGSTPV) show a composition bias toward polar residues. The disordered stretch occupies residues 335 to 363 (GSSNMPGGSTPVSSASMMSGISSVPTPSP). Low complexity predominate over residues 347-357 (SSASMMSGISS).

The protein belongs to the protein kinase superfamily. Ser/Thr protein kinase family. CK2 subfamily. As to quaternary structure, tetramer composed of an alpha chain, an alpha' and two beta chains. Interacts with RNPS1.

It localises to the nucleus. The enzyme catalyses L-seryl-[protein] + ATP = O-phospho-L-seryl-[protein] + ADP + H(+). The catalysed reaction is L-threonyl-[protein] + ATP = O-phospho-L-threonyl-[protein] + ADP + H(+). Its function is as follows. Catalytic subunit of a constitutively active serine/threonine-protein kinase complex that phosphorylates a large number of substrates containing acidic residues C-terminal to the phosphorylated serine or threonine. Regulates numerous cellular processes, such as cell cycle progression, apoptosis and transcription, as well as viral infection. May act as a regulatory node which integrates and coordinates numerous signals leading to an appropriate cellular response. During mitosis, functions as a component of the p53/TP53-dependent spindle assembly checkpoint (SAC) that maintains cyclin-B-CDK1 activity and G2 arrest in response to spindle damage. Can also negatively regulate apoptosis. Phosphorylates the caspases CASP9 and CASP2 and the apoptotic regulator NOL3. Phosphorylation protects CASP9 from cleavage and activation by CASP8, and inhibits the dimerization of CASP2 and activation of CASP8. Plays an important role in the circadian clock function by phosphorylating BMAL1. This Gallus gallus (Chicken) protein is Casein kinase II subunit alpha (CSNK2A1).